The following is a 448-amino-acid chain: Potassium/proton antiporter CemA (448 aa).

4 helical membrane passes run 224-244 (ALASIQYIGCLLFILSIISML), 325-345 (IILHLLTDIISIVTLIVLFII), 373-393 (ILLLTDLCIGFHSPHGWEIVI), and 408-428 (IISCFVSTFPVILDTVFKYWI).

It belongs to the CemA family.

It localises to the plastid. It is found in the chloroplast inner membrane. It carries out the reaction K(+)(in) + H(+)(out) = K(+)(out) + H(+)(in). Functionally, contributes to K(+)/H(+) antiport activity by supporting proton efflux to control proton extrusion and homeostasis in chloroplasts in a light-dependent manner to modulate photosynthesis. Prevents excessive induction of non-photochemical quenching (NPQ) under continuous-light conditions. Indirectly promotes efficient inorganic carbon uptake into chloroplasts. This is Potassium/proton antiporter CemA from Angiopteris evecta (Mule's foot fern).